Reading from the N-terminus, the 397-residue chain is Riboflavin biosynthesis protein RibBA (397 aa).

A DHBP synthase region spans residues 1-199; sequence MFHRIEEALE…IEDLIAYRRH (199 aa). D-ribulose 5-phosphate contacts are provided by residues 26-27, Asp31, 138-142, and Glu162; these read RE and RAGHT. Residue Glu27 participates in Mg(2+) binding. His141 contacts Mg(2+). The segment at 200–397 is GTP cyclohydrolase II; that stretch reads HETLVTREVE…VNKLGHLLNL (198 aa). Position 250–254 (250–254) interacts with GTP; that stretch reads RVHSE. Cys255, Cys266, and Cys268 together coordinate Zn(2+). GTP is bound by residues Gln271, 293–295, and Thr315; that span reads EGR. Residue Asp327 is the Proton acceptor; for GTP cyclohydrolase activity of the active site. Arg329 serves as the catalytic Nucleophile; for GTP cyclohydrolase activity. Thr350 and Lys355 together coordinate GTP.

This sequence in the N-terminal section; belongs to the DHBP synthase family. The protein in the C-terminal section; belongs to the GTP cyclohydrolase II family. Mg(2+) is required as a cofactor. Requires Mn(2+) as cofactor. Zn(2+) serves as cofactor.

The enzyme catalyses D-ribulose 5-phosphate = (2S)-2-hydroxy-3-oxobutyl phosphate + formate + H(+). The catalysed reaction is GTP + 4 H2O = 2,5-diamino-6-hydroxy-4-(5-phosphoribosylamino)-pyrimidine + formate + 2 phosphate + 3 H(+). The protein operates within cofactor biosynthesis; riboflavin biosynthesis; 2-hydroxy-3-oxobutyl phosphate from D-ribulose 5-phosphate: step 1/1. Its pathway is cofactor biosynthesis; riboflavin biosynthesis; 5-amino-6-(D-ribitylamino)uracil from GTP: step 1/4. Catalyzes the conversion of D-ribulose 5-phosphate to formate and 3,4-dihydroxy-2-butanone 4-phosphate. Its function is as follows. Catalyzes the conversion of GTP to 2,5-diamino-6-ribosylamino-4(3H)-pyrimidinone 5'-phosphate (DARP), formate and pyrophosphate. This Bacillus cereus (strain ATCC 10987 / NRS 248) protein is Riboflavin biosynthesis protein RibBA.